A 384-amino-acid polypeptide reads, in one-letter code: Protein V (384 aa).

2 disordered regions span residues 1-23 (MDQDAFILKEDSEVEREAPGGRE) and 38-317 (SEPT…TKKG). Over residues 7–20 (ILKEDSEVEREAPG) the composition is skewed to basic and acidic residues. The segment covering 50-59 (LHNTINTPQG) has biased composition (polar residues). Phosphoserine; by host is present on Ser68. A compositionally biased stretch (basic and acidic residues) spans 83–101 (RSGEESRVSGRTSKPEAEA). At Ser125 the chain carries Phosphoserine; by host. Residues 150-168 (GIEDENREMAAHPDKRGED) are compositionally biased toward basic and acidic residues. A compositionally biased stretch (polar residues) spans 191–206 (ASNNGRSMEPGSSHSA). Residues Ser192, Ser249, Ser257, and Ser260 each carry the phosphoserine; by host modification. Zn(2+) is bound by residues His318, Cys337, Cys341, Cys353, Cys355, Cys358, Cys362, and Cys365.

Belongs to the paramyxoviruses V protein family. As to quaternary structure, interacts with host IFIH1/MDA5 and DHX58/LGP2. Interacts with host IRF3. Interacts with host RIGI regulatory protein (via CARDs domain) and host TRIM25 (via SPRY domain); these interactions prevent TRIM25-mediated ubiquitination of RIG-I and disrupts downstream RIG-I signaling.

The protein resides in the host cytoplasm. Its function is as follows. Plays an essential role in the inhibition of host immune response. Prevents the establishment of cellular antiviral state by blocking interferon-alpha/beta (IFN-alpha/beta) production and signaling pathway. Interacts with host IFIH1/MDA5 and DHX58/LGP2 to inhibit the transduction pathway involved in the activation of IFN-beta promoter, thus protecting the virus against cell antiviral state. Also interacts with and inhibits host IRF3. Blocks the type I interferon signaling pathway by disrupting the RIG-I signaling pathway. The protein is Protein V (P/V/C) of Sendai virus (strain Fushimi) (SeV).